Consider the following 122-residue polypeptide: UPF0102 protein Cgl2031/cg2228 (122 aa).

This sequence belongs to the UPF0102 family.

The protein is UPF0102 protein Cgl2031/cg2228 of Corynebacterium glutamicum (strain ATCC 13032 / DSM 20300 / JCM 1318 / BCRC 11384 / CCUG 27702 / LMG 3730 / NBRC 12168 / NCIMB 10025 / NRRL B-2784 / 534).